The sequence spans 65 residues: Large ribosomal subunit protein bL33 (65 aa).

Positions 20–40 (VPPSEKRSPGVSRYTTEKNRR) are disordered.

This sequence belongs to the bacterial ribosomal protein bL33 family.

The polypeptide is Large ribosomal subunit protein bL33 (Prochlorococcus marinus (strain MIT 9211)).